The sequence spans 517 residues: ATP synthase subunit alpha (517 aa).

174–181 lines the ATP pocket; sequence GDRQTGKT.

Belongs to the ATPase alpha/beta chains family. F-type ATPases have 2 components, CF(1) - the catalytic core - and CF(0) - the membrane proton channel. CF(1) has five subunits: alpha(3), beta(3), gamma(1), delta(1), epsilon(1). CF(0) has three main subunits: a(1), b(2) and c(9-12). The alpha and beta chains form an alternating ring which encloses part of the gamma chain. CF(1) is attached to CF(0) by a central stalk formed by the gamma and epsilon chains, while a peripheral stalk is formed by the delta and b chains.

Its subcellular location is the cell inner membrane. The enzyme catalyses ATP + H2O + 4 H(+)(in) = ADP + phosphate + 5 H(+)(out). Functionally, produces ATP from ADP in the presence of a proton gradient across the membrane. The alpha chain is a regulatory subunit. This Variovorax paradoxus (strain S110) protein is ATP synthase subunit alpha.